Reading from the N-terminus, the 313-residue chain is Ribosomal RNA small subunit methyltransferase H (313 aa).

S-adenosyl-L-methionine-binding positions include G37 to H39, D57, F82, D104, and Q111.

Belongs to the methyltransferase superfamily. RsmH family.

It localises to the cytoplasm. It catalyses the reaction cytidine(1402) in 16S rRNA + S-adenosyl-L-methionine = N(4)-methylcytidine(1402) in 16S rRNA + S-adenosyl-L-homocysteine + H(+). Its function is as follows. Specifically methylates the N4 position of cytidine in position 1402 (C1402) of 16S rRNA. This is Ribosomal RNA small subunit methyltransferase H from Alteromonas mediterranea (strain DSM 17117 / CIP 110805 / LMG 28347 / Deep ecotype).